Reading from the N-terminus, the 428-residue chain is Spliceosome RNA helicase Ddx39b (428 aa).

A compositionally biased stretch (acidic residues) spans 1–19 (MAENDVDNELLDYEDDEVE). Residues 1 to 31 (MAENDVDNELLDYEDDEVETAAGADGTEAPA) form a disordered region. N-acetylalanine is present on Ala2. Position 36 is an N6-acetyllysine; alternate (Lys36). Residue Lys36 forms a Glycyl lysine isopeptide (Lys-Gly) (interchain with G-Cter in SUMO2); alternate linkage. Phosphoserine is present on residues Ser38 and Ser41. A Q motif motif is present at residues 45–73 (SGFRDFLLKPELLRAIVDCGFEHPSEVQH). Positions 76 to 249 (IPQAILGMDV…RKFMQDPMEI (174 aa)) constitute a Helicase ATP-binding domain. 89–96 (AKSGMGKT) is a binding site for ATP. At Thr172 the chain carries Phosphothreonine. The DECD box motif lies at 196-199 (DECD). The Helicase C-terminal domain maps to 261 to 422 (GLQQYYVKLK…ELPDEIDISS (162 aa)).

It belongs to the DEAD box helicase family. DECD subfamily. In terms of assembly, homodimer, and heterodimer with DDX39A. DDX39B interacts with the THO subcomplex to form the THO-DDX39B complex which multimerizes into a 28-subunit tetrameric assembly. Component of the transcription/export (TREX) complex at least composed of ALYREF/THOC4, DDX39B, SARNP/CIP29, CHTOP and the THO subcomplex; in the complex interacts with THOC2. THOC1-THOC2-THOC3-DDX39B subcomplex is sufficient for the interaction with export factor NXF1-NXT1. TREX seems to have a dynamic structure involving ATP-dependent remodeling. Within the TREX complex bridges ALYREF/THOC4 and the THO subcomplex, and, in a ATP-dependent manner, ALYREF/THOC4 and SARNP/CIP29. Component of the spliceosome. Interacts directly with U2AF2. Interacts with RBM8A, RNPS1 and SRRM1, FYTTD1/UIF, THOC1, MX1 and POLDIP3. Interacts with LUZP4. Interacts with SARNP/CIP29 (via the C-terminal domain); the interaction is direct and facilitates RNA binding of DDX39B.

The protein localises to the nucleus. It localises to the nucleus speckle. The protein resides in the cytoplasm. The catalysed reaction is ATP + H2O = ADP + phosphate + H(+). Its function is as follows. Involved in nuclear export of spliced and unspliced mRNA. Component of the TREX complex which is thought to couple mRNA transcription, processing and nuclear export, and specifically associates with spliced mRNA and not with unspliced pre-mRNA. The TREX complex is recruited to spliced mRNAs by a transcription-independent mechanism, binds to mRNA upstream of the exon-junction complex (EJC) and is recruited in a splicing- and cap-dependent manner to a region near the 5' end of the mRNA where it functions in mRNA export to the cytoplasm via the TAP/NXF1 pathway. The THOC1-THOC2-THOC3 core complex alone is sufficient to promote ATPase activity of DDX39B; in the complex THOC2 is the only component that directly interacts with DDX39B. Associates with SARNP/CIP29, which facilitates RNA binding of DDX39B and likely plays a role in mRNA export. May undergo several rounds of ATP hydrolysis during assembly of TREX to drive subsequent loading of components such as ALYREF/THOC4 and CHTOP onto mRNA. Also associates with pre-mRNA independent of ALYREF/THOC4. Involved in the nuclear export of intronless mRNA; the ATP-bound form is proposed to recruit export adapter ALYREF/THOC4 to intronless mRNA; its ATPase activity is cooperatively stimulated by RNA and ALYREF/THOC4 and ATP hydrolysis is thought to trigger the dissociation from RNA to allow the association of ALYREF/THOC4 and the NXF1-NXT1 heterodimer. Involved in transcription elongation and genome stability. Functionally, splice factor that is required for the first ATP-dependent step in spliceosome assembly and for the interaction of U2 snRNP with the branchpoint. Has both RNA-stimulated ATP binding/hydrolysis activity and ATP-dependent RNA unwinding activity. Even with the stimulation of RNA, the ATPase activity is weak. Can only hydrolyze ATP but not other NTPs. The RNA stimulation of ATPase activity does not have a strong preference for the sequence and length of the RNA. However, ssRNA stimulates the ATPase activity much more strongly than dsRNA. Can unwind 5' or 3' overhangs or blunt end RNA duplexes in vitro. The ATPase and helicase activities are not influenced by U2AF2; the effect of ALYREF/THOC4 is reported conflictingly. The sequence is that of Spliceosome RNA helicase Ddx39b (Ddx39b) from Mus musculus (Mouse).